Consider the following 268-residue polypeptide: Tryptophan synthase alpha chain (268 aa).

Residues Glu49 and Asp60 each act as proton acceptor in the active site.

It belongs to the TrpA family. In terms of assembly, tetramer of two alpha and two beta chains.

The enzyme catalyses (1S,2R)-1-C-(indol-3-yl)glycerol 3-phosphate + L-serine = D-glyceraldehyde 3-phosphate + L-tryptophan + H2O. It participates in amino-acid biosynthesis; L-tryptophan biosynthesis; L-tryptophan from chorismate: step 5/5. The alpha subunit is responsible for the aldol cleavage of indoleglycerol phosphate to indole and glyceraldehyde 3-phosphate. The sequence is that of Tryptophan synthase alpha chain from Edwardsiella ictaluri (strain 93-146).